The primary structure comprises 178 residues: Large ribosomal subunit protein uL6 (178 aa).

The protein belongs to the universal ribosomal protein uL6 family. In terms of assembly, part of the 50S ribosomal subunit.

In terms of biological role, this protein binds to the 23S rRNA, and is important in its secondary structure. It is located near the subunit interface in the base of the L7/L12 stalk, and near the tRNA binding site of the peptidyltransferase center. The protein is Large ribosomal subunit protein uL6 of Streptococcus pneumoniae serotype 4 (strain ATCC BAA-334 / TIGR4).